A 416-amino-acid chain; its full sequence is (S)-ureidoglycine--glyoxylate transaminase (416 aa).

Lysine 198 bears the N6-(pyridoxal phosphate)lysine mark.

The protein belongs to the class-V pyridoxal-phosphate-dependent aminotransferase family. In terms of assembly, homodimer. The cofactor is pyridoxal 5'-phosphate.

The catalysed reaction is (S)-2-ureidoglycine + glyoxylate = N-carbamoyl-2-oxoglycine + glycine. Its pathway is nitrogen metabolism; (S)-allantoin degradation. Its function is as follows. Catalyzes the transamination between an unstable intermediate ((S)-ureidoglycine) and the end product of purine catabolism (glyoxylate) to yield oxalurate and glycine. Glyoxylate is the preferred substrate, but other amino-group acceptors can be used. In Bacillus subtilis (strain 168), this protein is (S)-ureidoglycine--glyoxylate transaminase.